Consider the following 368-residue polypeptide: F-box only protein 28 (368 aa).

Basic and acidic residues predominate over residues 1–11 (MAAAAEERMAE). Positions 1 to 56 (MAAAAEERMAEEGGGGQGDGGSSLASGSTQRQPPPPAPQHPQPGSQALPAPALAPD) are disordered. Residues 12–21 (EGGGGQGDGG) show a composition bias toward gly residues. Positions 22–31 (SSLASGSTQR) are enriched in low complexity. Residues 32 to 41 (QPPPPAPQHP) are compositionally biased toward pro residues. Positions 42–56 (QPGSQALPAPALAPD) are enriched in low complexity. The region spanning 61–109 (NNTLVALPIVAIENILSFMSYDEISQLRLVCKRMDLVCQRMLNQGFLKV) is the F-box domain. Residues Ser235 and Ser242 each carry the phosphoserine modification. Phosphothreonine is present on Thr270. Residues 328-368 (MESAVGNSSGSGQNEESPRKRKKATEAIDSLRKSKRLRNRK) form a disordered region. Residues 333–342 (GNSSGSGQNE) are compositionally biased toward low complexity. A Phosphoserine modification is found at Ser344.

Part of a SCF (SKP1-cullin-F-box) protein ligase complex.

The protein resides in the chromosome. It is found in the centromere. Its subcellular location is the kinetochore. In terms of biological role, probably recognizes and binds to some phosphorylated proteins and promotes their ubiquitination and degradation. This chain is F-box only protein 28 (FBXO28), found in Homo sapiens (Human).